A 130-amino-acid polypeptide reads, in one-letter code: Chorion class B protein PC10 (130 aa).

The interval 1 to 22 is left arm; the sequence is GAWNGRLGCGCGGIAPAAELAA. The tract at residues 23 to 93 is central domain; the sequence is SYGGGLGVAS…GNGALGITAE (71 aa). Positions 94–130 are right arm (Gly-rich tandem repeats); that stretch reads RGYGAGIGYEGLGLGYGAGIGYKGYGLGGCGCGCGRL.

Belongs to the chorion protein family.

In terms of biological role, this protein is one of many from the eggshell of the silk moth. This Antheraea polyphemus (Polyphemus moth) protein is Chorion class B protein PC10.